The sequence spans 145 residues: Selenoprotein M (145 aa).

The first 23 residues, 1–23 (MSLLLPPLALLLLLAALVAPATA), serve as a signal peptide directing secretion. Catalysis depends on nucleophile residues Cys45 and Sec48. Residues 45 to 48 (CGGU) constitute a cross-link (cysteinyl-selenocysteine (Cys-Sec)). A non-standard amino acid (selenocysteine) is located at residue Sec48.

This sequence belongs to the selenoprotein M/F family. In terms of tissue distribution, widely expressed.

The protein resides in the cytoplasm. Its subcellular location is the perinuclear region. It is found in the endoplasmic reticulum. It localises to the golgi apparatus. Its function is as follows. May function as a thiol-disulfide oxidoreductase that participates in disulfide bond formation. This is Selenoprotein M from Homo sapiens (Human).